Consider the following 316-residue polypeptide: Probable cell division protein WhiA (316 aa).

Positions 275–309 (TLKELGEMVASGKISKSGINHRLRKLDEIAEQLRT) form a DNA-binding region, H-T-H motif.

Belongs to the WhiA family.

The protein resides in the cytoplasm. Its subcellular location is the nucleoid. Functionally, involved in cell division and chromosome segregation. May influence the activity of FtsZ. Binds DNA, but does not seem to function as a transcription factor. The protein is Probable cell division protein WhiA of Bacillus subtilis (strain 168).